The primary structure comprises 729 residues: Solute carrier family 15 member 2 (729 aa).

The segment at 1 to 34 (MNPFQKNESKETLFSPVSTEEMLPGPPSPPKKST) is disordered. The Cytoplasmic segment spans residues 1–57 (MNPFQKNESKETLFSPVSTEEMLPGPPSPPKKSTPKLFGSSYPLSIAFIVVNEFCER). At S9 the chain carries Phosphoserine. T12 is modified (phosphothreonine). Position 28 is a phosphoserine (S28). Residues 58–78 (FSYYGMKAVLTLYFLYFLHWN) traverse the membrane as a helical segment. The Extracellular segment spans residues 79–87 (EDTSTSVYH). Residues 88 to 108 (AFSSLCYFTPILGAAIADSWL) form a helical membrane-spanning segment. At 109 to 113 (GKFKT) the chain is on the cytoplasmic side. The helical transmembrane segment at 114–134 (IIYLSLVYVLGHVFKSLGAIP) threads the bilayer. At 135–139 (ILGGK) the chain is on the extracellular side. Residues 140–160 (MLHTILSLVGLSLIALGTGGI) form a helical membrane-spanning segment. Topologically, residues 161 to 183 (KPCVAAFGGDQFEEEHAEARTRY) are cytoplasmic. The helical transmembrane segment at 184–204 (FSVFYLSINAGSLISTFITPM) threads the bilayer. At 205-217 (LRGDVKCFGEDCY) the chain is on the extracellular side. Residues 218–238 (ALAFGIPGLLMVLALVVFAMG) form a helical membrane-spanning segment. The Cytoplasmic segment spans residues 239-295 (SKMYRKPPPEGNIVAQVTKCIWFAICNRFRNRSEDIPKRQHWLDWAAEKYPKHLIMD). The helical transmembrane segment at 296–316 (VKALTRILFLYIPLPMFWALL) threads the bilayer. The Extracellular portion of the chain corresponds to 317-343 (DQQGSRWTLQANKMDGDLGFFVLQPDQ). A helical transmembrane segment spans residues 344–364 (MQVLNPFLVLVFIPLFDLVIY). The Cytoplasmic portion of the chain corresponds to 365–380 (RLISKCGVNFSSLRKM). Residues 381 to 401 (AVGMILACLAFAVAALVEIKI) form a helical membrane-spanning segment. The Extracellular segment spans residues 402–611 (NGMIHPQPAS…PANKLSIAWQ (210 aa)). The segment at 402-611 (NGMIHPQPAS…PANKLSIAWQ (210 aa)) is extracellular domain (ECD). N-linked (GlcNAc...) asparagine glycans are attached at residues N448, N472, N528, and N587. Residues 612–632 (LPQYVLVTAAEVMFSVTGLEF) traverse the membrane as a helical segment. Over 633 to 643 (SYSQAPSSMKS) the chain is Cytoplasmic. Residues 644–664 (VLQAAWLLTVAVGNIIVLIVA) form a helical membrane-spanning segment. Over 665 to 674 (QFSGLVQWAE) the chain is Extracellular. The helical transmembrane segment at 675–695 (FVLFSCLLLVVCLIFSVMGYY) threads the bilayer. Topologically, residues 696–729 (YVPLKSEGIHEATEKQIPHIQGNMINLETKNTRL) are cytoplasmic.

Belongs to the major facilitator superfamily. Proton-dependent oligopeptide transporter (POT/PTR) (TC 2.A.17) family. In terms of assembly, interacts (via extracellular domain region) with trypsin. In terms of tissue distribution, expressed in kidney brush border cells (at protein level). Highly expressed in macrophages.

The protein localises to the apical cell membrane. The protein resides in the cytoplasmic vesicle. Its subcellular location is the phagosome membrane. It is found in the cell membrane. The catalysed reaction is N-acetyl-D-muramoyl-L-alanyl-D-isoglutamine(out) + 3 H(+)(out) = N-acetyl-D-muramoyl-L-alanyl-D-isoglutamine(in) + 3 H(+)(in). It carries out the reaction a dipeptide(out) + 2 H(+)(out) = a dipeptide(in) + 2 H(+)(in). The enzyme catalyses glycyl-L-leucine(out) + 2 H(+)(out) = glycyl-L-leucine(in) + 2 H(+)(in). It catalyses the reaction glycyl-L-lysine(out) + 2 H(+)(out) = glycyl-L-lysine(in) + 2 H(+)(in). The catalysed reaction is glycyl-L-glutamate(out) + 3 H(+)(out) = glycyl-L-glutamate(in) + 3 H(+)(in). It carries out the reaction L-alanyl-L-alanine(out) + 2 H(+)(out) = L-alanyl-L-alanine(in) + 2 H(+)(in). The enzyme catalyses an L-amino acid tripeptide(out) + 2 H(+)(out) = an L-amino acid tripeptide(in) + 2 H(+)(in). It catalyses the reaction carnosine(out) + 2 H(+)(out) = carnosine(in) + 2 H(+)(in). Proton-coupled amino-acid transporter that transports oligopeptides of 2 to 4 amino acids with a preference for dipeptides. Transports neutral and anionic dipeptides with a proton to peptide stoichiometry of 2:1 or 3:1. In kidney, involved in the absorption of circulating di- and tripeptides from the glomerular filtrate. Can also transport beta-lactam antibiotics, such as the aminocephalosporin cefadroxil, and other antiviral and anticancer drugs. Transports the dipeptide-like aminopeptidase inhibitor bestatin. Also able to transport carnosine. Involved in innate immunity by promoting the detection of microbial pathogens by NOD-like receptors (NLRs). Mediates transport of bacterial peptidoglycans across the plasma membrane or, in macrophages, the phagosome membrane: catalyzes the transport of certain bacterial peptidoglycans, such as muramyl dipeptide (MDP), the NOD2 ligand. This is Solute carrier family 15 member 2 from Mus musculus (Mouse).